The primary structure comprises 107 residues: Envelope small membrane protein (107 aa).

Residues 1–11 lie on the Virion surface side of the membrane; it reads MMNLVNKSLEE. Residues 12–32 traverse the membrane as a helical segment; that stretch reads NGSFLTAVYIFCAFVALYLLG. The Intravirion portion of the chain corresponds to 33 to 107; it reads RALHAFVQAA…NFQNDGKLHS (75 aa).

Belongs to the gammacoronaviruses E protein family. As to quaternary structure, homooligomer. Interacts with the M membrane protein in the budding compartment of the host cell, which is located between endoplasmic reticulum and the Golgi complex. The cytoplasmic tails of both proteins are important for this function. Interacts with Nucleoprotein.

The protein resides in the host Golgi apparatus membrane. Plays a central role in virus morphogenesis and assembly. Acts as a viroporin and self-assembles in host membranes forming pentameric protein-lipid pores that allow ion transport. Also plays a role in the induction of apoptosis. In Gallus gallus (Chicken), this protein is Envelope small membrane protein.